We begin with the raw amino-acid sequence, 140 residues long: Profilin (140 aa).

The protein belongs to the profilin family. As to quaternary structure, occurs in many kinds of cells as a complex with monomeric actin in a 1:1 ratio.

Binds to actin and affects the structure of the cytoskeleton. At high concentrations, profilin prevents the polymerization of actin, whereas it enhances it at low concentrations. By binding to PIP2, it inhibits the formation of IP3 and DG. This chain is Profilin, found in Suberites domuncula (Sponge).